The sequence spans 244 residues: MPESPSISAVRDLREATCGPIGTPEVTNELSENIILTSLDDLHNWARLSSLWPLLYGTACCFIEFAALLGSRFDFDRFGLVPRSSPRQADLLIVAGTVTMKMAPALVRLYEQMPEPKYVIAMGACTITGGMFSADSTTAVRGVDKLIPVDLYLPGCPPRPEAIFDAVIKLRKKVGDESLAERSKHQQTHRYFTMTHQMKAVEPQVTGAYLRAESQQAALAAAPAGQTLATDAAVLNPAPEMVQP.

The [4Fe-4S] cluster site is built by Cys60, Cys61, Cys125, and Cys156.

The protein belongs to the complex I 20 kDa subunit family. NDH-1 can be composed of about 15 different subunits; different subcomplexes with different compositions have been identified which probably have different functions. It depends on [4Fe-4S] cluster as a cofactor.

The protein localises to the cellular thylakoid membrane. The enzyme catalyses a plastoquinone + NADH + (n+1) H(+)(in) = a plastoquinol + NAD(+) + n H(+)(out). It catalyses the reaction a plastoquinone + NADPH + (n+1) H(+)(in) = a plastoquinol + NADP(+) + n H(+)(out). In terms of biological role, NDH-1 shuttles electrons from an unknown electron donor, via FMN and iron-sulfur (Fe-S) centers, to quinones in the respiratory and/or the photosynthetic chain. The immediate electron acceptor for the enzyme in this species is believed to be plastoquinone. Couples the redox reaction to proton translocation, and thus conserves the redox energy in a proton gradient. Cyanobacterial NDH-1 also plays a role in inorganic carbon-concentration. In Synechococcus sp. (strain CC9902), this protein is NAD(P)H-quinone oxidoreductase subunit K.